We begin with the raw amino-acid sequence, 189 residues long: Ribosome hibernation promotion factor (189 aa).

This sequence belongs to the HPF/YfiA ribosome-associated protein family. Long HPF subfamily. In terms of assembly, interacts with 100S ribosomes.

The protein localises to the cytoplasm. Required for dimerization of active 70S ribosomes into 100S ribosomes in stationary phase; 100S ribosomes are translationally inactive and sometimes present during exponential growth. This Staphylococcus epidermidis (strain ATCC 35984 / DSM 28319 / BCRC 17069 / CCUG 31568 / BM 3577 / RP62A) protein is Ribosome hibernation promotion factor.